We begin with the raw amino-acid sequence, 253 residues long: Flagellar brake protein YcgR (253 aa).

Residues 120-239 enclose the PilZ domain; that stretch reads QRRDFYRFAT…NEGLINRYVY (120 aa).

It belongs to the YcgR family. As to quaternary structure, monomer. Interacts with the flagellar basal bodies.

Its subcellular location is the bacterial flagellum basal body. In terms of biological role, acts as a flagellar brake, regulating swimming and swarming in a bis-(3'-5') cyclic diguanylic acid (c-di-GMP)-dependent manner. Binds 1 c-di-GMP dimer per subunit. Increasing levels of c-di-GMP lead to decreased motility. In Methylotenera mobilis (strain JLW8 / ATCC BAA-1282 / DSM 17540), this protein is Flagellar brake protein YcgR.